The chain runs to 416 residues: Serine hydroxymethyltransferase (416 aa).

Residues Leu121 and 125-127 contribute to the (6S)-5,6,7,8-tetrahydrofolate site; that span reads GHL. The residue at position 230 (Lys230) is an N6-(pyridoxal phosphate)lysine. 355-357 is a binding site for (6S)-5,6,7,8-tetrahydrofolate; the sequence is SPF.

The protein belongs to the SHMT family. Homodimer. Requires pyridoxal 5'-phosphate as cofactor.

It is found in the cytoplasm. The catalysed reaction is (6R)-5,10-methylene-5,6,7,8-tetrahydrofolate + glycine + H2O = (6S)-5,6,7,8-tetrahydrofolate + L-serine. Its pathway is one-carbon metabolism; tetrahydrofolate interconversion. The protein operates within amino-acid biosynthesis; glycine biosynthesis; glycine from L-serine: step 1/1. Its function is as follows. Catalyzes the reversible interconversion of serine and glycine with tetrahydrofolate (THF) serving as the one-carbon carrier. This reaction serves as the major source of one-carbon groups required for the biosynthesis of purines, thymidylate, methionine, and other important biomolecules. Also exhibits THF-independent aldolase activity toward beta-hydroxyamino acids, producing glycine and aldehydes, via a retro-aldol mechanism. In Streptococcus thermophilus (strain CNRZ 1066), this protein is Serine hydroxymethyltransferase.